A 906-amino-acid chain; its full sequence is uncharacterized protein (906 aa).

2 disordered regions span residues 231-322 and 865-906; these read KEDA…PSTI and AGAY…DEDE. A compositionally biased stretch (low complexity) spans 236 to 250; that stretch reads TTKQTTTTTTTTPQT. The span at 264–281 shows a compositional bias: pro residues; sequence TPTPAPAPKPTTPKPTPA. Polar residues predominate over residues 302 to 314; the sequence is SVNNIPTPSDTNE. A compositionally biased stretch (acidic residues) spans 867–906; it reads AYEDDDDDEGEGNEDDEDNDENEDEDEGEGEGDSSEDEDE.

This is an uncharacterized protein from Dictyostelium sp. (strain GA11) (Slime mold).